We begin with the raw amino-acid sequence, 84 residues long: Mu-Sparatoxin-Hp1 (84 aa).

The signal sequence occupies residues 1–20 (MKIAIVMTLLLVAFSTASFA). Residues 21 to 35 (IEPIERAALDLVMAR) constitute a propeptide that is removed on maturation. Cystine bridges form between cysteine 54-cysteine 68, cysteine 61-cysteine 73, and cysteine 67-cysteine 78. Leucine 82 is subject to Leucine amide.

As to expression, expressed by the venom gland.

The protein resides in the secreted. Its function is as follows. Weakly nhibits voltage-gated sodium channels Nav1.7/SCN9A. High concentration of the toxin (3 uM) inhibits Nav1.7/SCN9A currents by 79%. The chain is Mu-Sparatoxin-Hp1 from Heteropoda pingtungensis (Pingtung huntsman spider).